The sequence spans 49 residues: Large ribosomal subunit protein bL33A (49 aa).

Belongs to the bacterial ribosomal protein bL33 family.

This is Large ribosomal subunit protein bL33A from Limosilactobacillus reuteri subsp. reuteri (strain JCM 1112) (Lactobacillus reuteri).